Here is a 97-residue protein sequence, read N- to C-terminus: Putative membrane protein insertion efficiency factor (97 aa).

Belongs to the UPF0161 family.

It is found in the cell membrane. Its function is as follows. Could be involved in insertion of integral membrane proteins into the membrane. This Lactobacillus gasseri (strain ATCC 33323 / DSM 20243 / BCRC 14619 / CIP 102991 / JCM 1131 / KCTC 3163 / NCIMB 11718 / NCTC 13722 / AM63) protein is Putative membrane protein insertion efficiency factor.